The following is a 431-amino-acid chain: Glutamyl-tRNA reductase (431 aa).

Substrate-binding positions include 49–52 (TCNR), S109, 114–116 (EGQ), and Q120. C50 acts as the Nucleophile in catalysis. Residue 189-194 (GAGKMA) participates in NADP(+) binding.

It belongs to the glutamyl-tRNA reductase family. Homodimer.

The catalysed reaction is (S)-4-amino-5-oxopentanoate + tRNA(Glu) + NADP(+) = L-glutamyl-tRNA(Glu) + NADPH + H(+). It participates in porphyrin-containing compound metabolism; protoporphyrin-IX biosynthesis; 5-aminolevulinate from L-glutamyl-tRNA(Glu): step 1/2. Its pathway is porphyrin-containing compound metabolism; chlorophyll biosynthesis. Its function is as follows. Catalyzes the NADPH-dependent reduction of glutamyl-tRNA(Glu) to glutamate 1-semialdehyde (GSA). This is Glutamyl-tRNA reductase from Synechococcus sp. (strain JA-3-3Ab) (Cyanobacteria bacterium Yellowstone A-Prime).